The primary structure comprises 138 residues: Small ribosomal subunit protein uS8 (138 aa).

The protein belongs to the universal ribosomal protein uS8 family. Part of the 30S ribosomal subunit. Contacts proteins S5 and S12.

Its function is as follows. One of the primary rRNA binding proteins, it binds directly to 16S rRNA central domain where it helps coordinate assembly of the platform of the 30S subunit. The chain is Small ribosomal subunit protein uS8 from Thermus aquaticus.